The chain runs to 234 residues: 7-cyano-7-deazaguanine synthase (234 aa).

Position 13 to 23 (13 to 23) interacts with ATP; the sequence is FSGGIDSTTCL. Zn(2+) contacts are provided by cysteine 197, cysteine 207, cysteine 210, and cysteine 213.

Belongs to the QueC family. The cofactor is Zn(2+).

It catalyses the reaction 7-carboxy-7-deazaguanine + NH4(+) + ATP = 7-cyano-7-deazaguanine + ADP + phosphate + H2O + H(+). The protein operates within purine metabolism; 7-cyano-7-deazaguanine biosynthesis. Catalyzes the ATP-dependent conversion of 7-carboxy-7-deazaguanine (CDG) to 7-cyano-7-deazaguanine (preQ(0)). The protein is 7-cyano-7-deazaguanine synthase of Syntrophobacter fumaroxidans (strain DSM 10017 / MPOB).